The primary structure comprises 292 residues: Proteasome subunit beta (292 aa).

Positions 1–62 are cleaved as a propeptide — removed in mature form; by autocatalysis; sequence MSESLGSVPG…HRAADDIPHG (62 aa). Thr-63 serves as the catalytic Nucleophile.

Belongs to the peptidase T1B family. As to quaternary structure, the 20S proteasome core is composed of 14 alpha and 14 beta subunits that assemble into four stacked heptameric rings, resulting in a barrel-shaped structure. The two inner rings, each composed of seven catalytic beta subunits, are sandwiched by two outer rings, each composed of seven alpha subunits. The catalytic chamber with the active sites is on the inside of the barrel. Has a gated structure, the ends of the cylinder being occluded by the N-termini of the alpha-subunits. Is capped by the proteasome-associated ATPase, ARC.

The protein localises to the cytoplasm. It carries out the reaction Cleavage of peptide bonds with very broad specificity.. Its pathway is protein degradation; proteasomal Pup-dependent pathway. Its activity is regulated as follows. The formation of the proteasomal ATPase ARC-20S proteasome complex, likely via the docking of the C-termini of ARC into the intersubunit pockets in the alpha-rings, may trigger opening of the gate for substrate entry. Interconversion between the open-gate and close-gate conformations leads to a dynamic regulation of the 20S proteasome proteolysis activity. In terms of biological role, component of the proteasome core, a large protease complex with broad specificity involved in protein degradation. The polypeptide is Proteasome subunit beta (Gordonia bronchialis (strain ATCC 25592 / DSM 43247 / BCRC 13721 / JCM 3198 / KCTC 3076 / NBRC 16047 / NCTC 10667) (Rhodococcus bronchialis)).